Here is a 182-residue protein sequence, read N- to C-terminus: uncharacterized protein (182 aa).

BNR repeat units follow at residues 58-69 (WISFDAGENWET) and 102-113 (YITDDRGESWRA).

This is an uncharacterized protein from Saccharomyces cerevisiae (strain ATCC 204508 / S288c) (Baker's yeast).